The following is a 274-amino-acid chain: MAIKTYKPTSPGRRAQTCSTFEEITACKPERSLVENLKKSGGRNSNGRITSRNVGGGHKQKYRIIDFRRDKTEIPAKVATIEYDPCRSARIALLNYADGEKRYILAPLSLKVGDTVISSEQADIKPGNALPIRCIPLGTIIHNIELKIGKGAQLARSAGTFAQLMAKEGKYGQVKLPSGEVRMILMDCKATIGQVGNVDHENVSIGKAGRSRWLGVRPHVRGVAMNPVDHPHGGGEGRTSGGRHPVTPWGIPTKGYKTRTNKRSTPFIVKKRTK.

The disordered stretch occupies residues 224–259; the sequence is AMNPVDHPHGGGEGRTSGGRHPVTPWGIPTKGYKTR.

The protein belongs to the universal ribosomal protein uL2 family. Part of the 50S ribosomal subunit. Forms a bridge to the 30S subunit in the 70S ribosome.

One of the primary rRNA binding proteins. Required for association of the 30S and 50S subunits to form the 70S ribosome, for tRNA binding and peptide bond formation. It has been suggested to have peptidyltransferase activity; this is somewhat controversial. Makes several contacts with the 16S rRNA in the 70S ribosome. The chain is Large ribosomal subunit protein uL2 from Geobacter sp. (strain M21).